Reading from the N-terminus, the 356-residue chain is MSCPAAAVLTPDMRAFLRRFHEEMGEPGLPARLRAVEEAGLWWPTSAELTWGAKVAWRNSTRCVGRLYWEALSVRDLRELNTAQAVYEALLQHLDDAFCGGHIRPVISVFGPGVRLHNPQLIRYADDPINADFVDKLRRFGWQPRGERFEVLPLLIEVNGRAELFSLPPQAVQEVAITHPVCLGIGELGLRWHALPVISDMHLDIGGLHLPCAFSGWYVQTEIAARDLADVGRYDQLPAVARALGLDTSRERTLWRDRALVELNVAVLHSFDAAGVKLADHHTVTAHHVRFEEREARAGREVRGKWSWLVPPLSPATTPLWSRRYRAREESPRFVRARCPFHTPTVHASTGHAPTG.

A heme-binding site is contributed by Cys-63.

This sequence belongs to the NOS family. Bacterial NOS oxygenase subfamily. In terms of assembly, homodimer. Forms a complex with trpS2; one homodimer of trpS2 binds one homodimer of nos. The cofactor is heme. (6S)-5,6,7,8-tetrahydrofolate serves as cofactor.

The catalysed reaction is 3 reduced [flavodoxin] + 2 L-arginine + 4 O2 = 3 oxidized [flavodoxin] + 2 L-citrulline + 2 nitric oxide + 4 H2O + 5 H(+). With respect to regulation, nitric oxide synthase activity is increased by trpS2. In terms of biological role, catalyzes the production of nitric oxide. The complex between TrpRS II and nitric oxide synthase oxygenase catalyzes the regioselective nitration of tryptophan at the 4-position. The polypeptide is Nitric oxide synthase oxygenase (nos) (Deinococcus radiodurans (strain ATCC 13939 / DSM 20539 / JCM 16871 / CCUG 27074 / LMG 4051 / NBRC 15346 / NCIMB 9279 / VKM B-1422 / R1)).